We begin with the raw amino-acid sequence, 278 residues long: Elongation factor Ts (278 aa).

Residues 79 to 82 (TDFV) form an involved in Mg(2+) ion dislocation from EF-Tu region.

This sequence belongs to the EF-Ts family.

It is found in the cytoplasm. Functionally, associates with the EF-Tu.GDP complex and induces the exchange of GDP to GTP. It remains bound to the aminoacyl-tRNA.EF-Tu.GTP complex up to the GTP hydrolysis stage on the ribosome. The sequence is that of Elongation factor Ts from Borrelia hermsii (strain HS1 / DAH).